Consider the following 284-residue polypeptide: Phosphonates import ATP-binding protein PhnC 2 (284 aa).

The region spanning 5–253 (IEVRGLSKSF…MLRDLYGTEA (249 aa)) is the ABC transporter domain. 38 to 45 (GASGSGKS) lines the ATP pocket.

It belongs to the ABC transporter superfamily. Phosphonates importer (TC 3.A.1.9.1) family. The complex is composed of two ATP-binding proteins (PhnC), two transmembrane proteins (PhnE) and a solute-binding protein (PhnD).

It is found in the cell inner membrane. The enzyme catalyses phosphonate(out) + ATP + H2O = phosphonate(in) + ADP + phosphate + H(+). Functionally, part of the ABC transporter complex PhnCDE involved in phosphonates import. Responsible for energy coupling to the transport system. This is Phosphonates import ATP-binding protein PhnC 2 from Cupriavidus necator (strain ATCC 17699 / DSM 428 / KCTC 22496 / NCIMB 10442 / H16 / Stanier 337) (Ralstonia eutropha).